A 309-amino-acid chain; its full sequence is Histone-lysine N-methyltransferase SETMAR (309 aa).

Residues 74–137 (PGCACIETPC…RCRNRVVQNG (64 aa)) form the Pre-SET domain. Cys-76, Cys-78, Cys-83, Cys-88, Cys-90, Cys-119, Cys-123, Cys-125, and Cys-129 together coordinate Zn(2+). Residues 140 to 264 (FLLQVFQTEK…PGEELSYDYS (125 aa)) form the SET domain. S-adenosyl-L-methionine contacts are provided by residues 150–152 (KGW), Tyr-193, Arg-221, and 224–225 (NH). Cys-227, Cys-288, Cys-290, and Cys-295 together coordinate Zn(2+). One can recognise a Post-SET domain in the interval 284–300 (PRKPCYCGAQSCTTFLP).

Belongs to the class V-like SAM-binding methyltransferase superfamily.

Its subcellular location is the nucleus. The protein localises to the chromosome. The catalysed reaction is L-lysyl(36)-[histone H3] + 2 S-adenosyl-L-methionine = N(6),N(6)-dimethyl-L-lysyl(36)-[histone H3] + 2 S-adenosyl-L-homocysteine + 2 H(+). Histone methyltransferase that methylates 'Lys-4' and 'Lys-36' of histone H3, 2 specific tags for epigenetic transcriptional activation. Specifically mediates dimethylation of H3 'Lys-36'. This is Histone-lysine N-methyltransferase SETMAR from Mus musculus (Mouse).